The following is a 265-amino-acid chain: 3-methyl-2-oxobutanoate hydroxymethyltransferase (265 aa).

Mg(2+) contacts are provided by aspartate 44 and aspartate 83. 3-methyl-2-oxobutanoate is bound by residues aspartate 44–serine 45, aspartate 83, and lysine 113. Residue glutamate 115 coordinates Mg(2+). Glutamate 182 serves as the catalytic Proton acceptor.

This sequence belongs to the PanB family. Homodecamer; pentamer of dimers. Mg(2+) is required as a cofactor.

Its subcellular location is the cytoplasm. The catalysed reaction is 3-methyl-2-oxobutanoate + (6R)-5,10-methylene-5,6,7,8-tetrahydrofolate + H2O = 2-dehydropantoate + (6S)-5,6,7,8-tetrahydrofolate. It functions in the pathway cofactor biosynthesis; (R)-pantothenate biosynthesis; (R)-pantoate from 3-methyl-2-oxobutanoate: step 1/2. Its function is as follows. Catalyzes the reversible reaction in which hydroxymethyl group from 5,10-methylenetetrahydrofolate is transferred onto alpha-ketoisovalerate to form ketopantoate. This is 3-methyl-2-oxobutanoate hydroxymethyltransferase from Aquifex aeolicus (strain VF5).